The chain runs to 412 residues: Alpha-1-antitrypsin 1-3 (412 aa).

Positions 1 to 24 are cleaved as a signal peptide; it reads MTPSISWGLLLLAGLCCLVPSFLA. Residues asparagine 64, asparagine 101, and asparagine 265 are each glycosylated (N-linked (GlcNAc...) asparagine). An RCL region spans residues 368 to 387; it reads AVTVLLAVPYSMPPILRFDH.

It belongs to the serpin family.

It is found in the secreted. Inhibitor of serine proteases. Can inhibit trypsin and chymotrypsin; relatively ineffective against elastase. The protein is Alpha-1-antitrypsin 1-3 (Serpina1c) of Mus musculus (Mouse).